The following is a 151-amino-acid chain: Sec-independent protein translocase protein TatB (151 aa).

The chain crosses the membrane as a helical span at residues 1–21; that stretch reads MFDVSFTELMVIGVIALVVIG. Residues 66 to 151 form a disordered region; it reads MDETARSMQT…DKTPPTGSAT (86 aa). A compositionally biased stretch (basic and acidic residues) spans 93-103; that stretch reads AELDDTARDAS. Low complexity-rich tracts occupy residues 109 to 122 and 133 to 151; these read ADAP…VASD and APPA…GSAT.

It belongs to the TatB family. In terms of assembly, the Tat system comprises two distinct complexes: a TatABC complex, containing multiple copies of TatA, TatB and TatC subunits, and a separate TatA complex, containing only TatA subunits. Substrates initially bind to the TatABC complex, which probably triggers association of the separate TatA complex to form the active translocon.

The protein resides in the cell inner membrane. In terms of biological role, part of the twin-arginine translocation (Tat) system that transports large folded proteins containing a characteristic twin-arginine motif in their signal peptide across membranes. Together with TatC, TatB is part of a receptor directly interacting with Tat signal peptides. TatB may form an oligomeric binding site that transiently accommodates folded Tat precursor proteins before their translocation. This chain is Sec-independent protein translocase protein TatB, found in Bordetella parapertussis (strain 12822 / ATCC BAA-587 / NCTC 13253).